We begin with the raw amino-acid sequence, 525 residues long: Light-independent protochlorophyllide reductase subunit B (525 aa).

D36 serves as a coordination point for [4Fe-4S] cluster. D292 acts as the Proton donor in catalysis. Position 428 to 429 (428 to 429) interacts with substrate; it reads GL. The disordered stretch occupies residues 447-470; sequence PSASSENGSAPLSAGTATPAAAPE. A compositionally biased stretch (low complexity) spans 460 to 470; it reads AGTATPAAAPE.

The protein belongs to the ChlB/BchB/BchZ family. As to quaternary structure, protochlorophyllide reductase is composed of three subunits; BchL, BchN and BchB. Forms a heterotetramer of two BchB and two BchN subunits. Requires [4Fe-4S] cluster as cofactor.

The enzyme catalyses chlorophyllide a + oxidized 2[4Fe-4S]-[ferredoxin] + 2 ADP + 2 phosphate = protochlorophyllide a + reduced 2[4Fe-4S]-[ferredoxin] + 2 ATP + 2 H2O. It participates in porphyrin-containing compound metabolism; bacteriochlorophyll biosynthesis (light-independent). Component of the dark-operative protochlorophyllide reductase (DPOR) that uses Mg-ATP and reduced ferredoxin to reduce ring D of protochlorophyllide (Pchlide) to form chlorophyllide a (Chlide). This reaction is light-independent. The NB-protein (BchN-BchB) is the catalytic component of the complex. This Chlorobium luteolum (strain DSM 273 / BCRC 81028 / 2530) (Pelodictyon luteolum) protein is Light-independent protochlorophyllide reductase subunit B.